A 125-amino-acid chain; its full sequence is Small ribosomal subunit protein uS13 (125 aa).

Positions 99-125 (RGQRTKTNARTRKGKRKTVANKKMAAK) are disordered.

The protein belongs to the universal ribosomal protein uS13 family. In terms of assembly, part of the 30S ribosomal subunit. Forms a loose heterodimer with protein S19. Forms two bridges to the 50S subunit in the 70S ribosome.

Located at the top of the head of the 30S subunit, it contacts several helices of the 16S rRNA. In the 70S ribosome it contacts the 23S rRNA (bridge B1a) and protein L5 of the 50S subunit (bridge B1b), connecting the 2 subunits; these bridges are implicated in subunit movement. Contacts the tRNAs in the A and P-sites. The sequence is that of Small ribosomal subunit protein uS13 from Borrelia turicatae (strain 91E135).